The sequence spans 199 residues: Peroxiredoxin-1 (199 aa).

Ser2 carries the post-translational modification N-acetylserine. The 160-residue stretch at 6-165 (AKIGHPAPNF…TLRLVQAFQF (160 aa)) folds into the Thioredoxin domain. At Lys7 the chain carries N6-acetyllysine; alternate. Lys7 is covalently cross-linked (Glycyl lysine isopeptide (Lys-Gly) (interchain with G-Cter in SUMO2); alternate). N6-acetyllysine is present on residues Lys16 and Lys27. Ser32 carries the phosphoserine modification. Residue Lys35 is modified to N6-acetyllysine; alternate. An N6-succinyllysine; alternate modification is found at Lys35. Residue Cys52 is the Cysteine sulfenic acid (-SOH) intermediate of the active site. Thr90 carries the phosphothreonine; by CDK1 modification. Residue Lys120 forms a Glycyl lysine isopeptide (Lys-Gly) (interchain with G-Cter in SUMO2) linkage. Lys136 carries the post-translational modification N6-acetyllysine. A disordered region spans residues 176–199 (GWKPGSDTIKPDVQKSKEYFSKQK). The span at 184–199 (IKPDVQKSKEYFSKQK) shows a compositional bias: basic and acidic residues. Residue Lys185 forms a Glycyl lysine isopeptide (Lys-Gly) (interchain with G-Cter in SUMO1) linkage. Position 197 is an N6-acetyllysine (Lys197).

This sequence belongs to the peroxiredoxin family. AhpC/Prx1 subfamily. Homodimer; disulfide-linked, upon oxidation. 5 homodimers assemble to form a ring-like decamer. Interacts with GDPD5; forms a mixed-disulfide with GDPD5. Interacts with SESN1 and SESN2. Interacts with FAM107A. Phosphorylated on Thr-90 during the M-phase, which leads to a more than 80% decrease in enzymatic activity. In terms of processing, acetylation increases reducing activity and resistance to superoxidation. Deacetylated by HDAC6 which decreases reducing activity. Post-translationally, the enzyme can be inactivated by further oxidation of the cysteine sulfenic acid (C(P)-SOH) to sulphinic acid (C(P)-SO2H) instead of its condensation to a disulfide bond. It can be reactivated by forming a transient disulfide bond with sulfiredoxin SRXN1, which reduces the cysteine sulfinic acid in an ATP- and Mg-dependent manner.

It is found in the cytoplasm. Its subcellular location is the melanosome. It carries out the reaction a hydroperoxide + [thioredoxin]-dithiol = an alcohol + [thioredoxin]-disulfide + H2O. Its function is as follows. Thiol-specific peroxidase that catalyzes the reduction of hydrogen peroxide and organic hydroperoxides to water and alcohols, respectively. Plays a role in cell protection against oxidative stress by detoxifying peroxides and as sensor of hydrogen peroxide-mediated signaling events. Might participate in the signaling cascades of growth factors and tumor necrosis factor-alpha by regulating the intracellular concentrations of H(2)O(2). Reduces an intramolecular disulfide bond in GDPD5 that gates the ability to GDPD5 to drive postmitotic motor neuron differentiation. This is Peroxiredoxin-1 (PRDX1) from Homo sapiens (Human).